The primary structure comprises 430 residues: UDP-N-acetylmuramoylalanine--D-glutamate ligase (430 aa).

105-111 (GSNGKTT) is a binding site for ATP.

It belongs to the MurCDEF family.

It localises to the cytoplasm. The enzyme catalyses UDP-N-acetyl-alpha-D-muramoyl-L-alanine + D-glutamate + ATP = UDP-N-acetyl-alpha-D-muramoyl-L-alanyl-D-glutamate + ADP + phosphate + H(+). The protein operates within cell wall biogenesis; peptidoglycan biosynthesis. Its function is as follows. Cell wall formation. Catalyzes the addition of glutamate to the nucleotide precursor UDP-N-acetylmuramoyl-L-alanine (UMA). This Pseudothermotoga lettingae (strain ATCC BAA-301 / DSM 14385 / NBRC 107922 / TMO) (Thermotoga lettingae) protein is UDP-N-acetylmuramoylalanine--D-glutamate ligase.